The following is a 122-amino-acid chain: Large ribosomal subunit protein uL14 (122 aa).

Belongs to the universal ribosomal protein uL14 family. Part of the 50S ribosomal subunit. Forms a cluster with proteins L3 and L19. In the 70S ribosome, L14 and L19 interact and together make contacts with the 16S rRNA in bridges B5 and B8.

In terms of biological role, binds to 23S rRNA. Forms part of two intersubunit bridges in the 70S ribosome. This is Large ribosomal subunit protein uL14 from Nitrobacter winogradskyi (strain ATCC 25391 / DSM 10237 / CIP 104748 / NCIMB 11846 / Nb-255).